A 154-amino-acid polypeptide reads, in one-letter code: MQEKSIRLGIVVAEFNYDITQLMLQKALSHARFLNVEVKVVIKVPGTFDMPLAIKKLLEKDFIDAVVTLGAVIKGETKHDELVASQTARKIVDLSTEFNKPVTLGIIGHGATHEQAVERIEEYATRAVEAAIKLVQRTRKLDELKEIKETVIIE.

5-amino-6-(D-ribitylamino)uracil is bound by residues phenylalanine 15, 47 to 49 (TFD), and 71 to 73 (AVI). 76-77 (ET) contacts (2S)-2-hydroxy-3-oxobutyl phosphate. Residue histidine 79 is the Proton donor of the active site. Leucine 104 serves as a coordination point for 5-amino-6-(D-ribitylamino)uracil. Arginine 119 contacts (2S)-2-hydroxy-3-oxobutyl phosphate.

This sequence belongs to the DMRL synthase family.

It catalyses the reaction (2S)-2-hydroxy-3-oxobutyl phosphate + 5-amino-6-(D-ribitylamino)uracil = 6,7-dimethyl-8-(1-D-ribityl)lumazine + phosphate + 2 H2O + H(+). The protein operates within cofactor biosynthesis; riboflavin biosynthesis; riboflavin from 2-hydroxy-3-oxobutyl phosphate and 5-amino-6-(D-ribitylamino)uracil: step 1/2. Its function is as follows. Catalyzes the formation of 6,7-dimethyl-8-ribityllumazine by condensation of 5-amino-6-(D-ribitylamino)uracil with 3,4-dihydroxy-2-butanone 4-phosphate. This is the penultimate step in the biosynthesis of riboflavin. The protein is 6,7-dimethyl-8-ribityllumazine synthase of Saccharolobus solfataricus (strain ATCC 35092 / DSM 1617 / JCM 11322 / P2) (Sulfolobus solfataricus).